Reading from the N-terminus, the 752-residue chain is Photosystem I P700 chlorophyll a apoprotein A1 (752 aa).

8 helical membrane-spanning segments follow: residues 73–96 (IFAA…FHGA), 159–182 (LYVT…FHYH), 198–222 (LNHH…HVSA), 294–312 (ISHH…GHMY), 349–372 (WHAQ…HHMY), 388–414 (LCIF…IFMV), 436–458 (AIIS…LYVH), and 533–551 (FLVH…LILL). Positions 575 and 584 each coordinate [4Fe-4S] cluster. 2 helical membrane-spanning segments follow: residues 591-612 (HVFL…HFSW) and 666-688 (LSAY…MFLF). His677 provides a ligand contact to chlorophyll a'. Chlorophyll a-binding residues include Met685 and Tyr693. Trp694 contributes to the phylloquinone binding site. A helical membrane pass occupies residues 726–746 (AVGVAHYLLGGIATTWAFFHA).

This sequence belongs to the PsaA/PsaB family. As to quaternary structure, the PsaA/B heterodimer binds the P700 chlorophyll special pair and subsequent electron acceptors. PSI consists of a core antenna complex that captures photons, and an electron transfer chain that converts photonic excitation into a charge separation. The cyanobacterial PSI reaction center is composed of one copy each of PsaA,B,C,D,E,F,I,J,K,L,M and X, and forms trimeric complexes. PSI electron transfer chain: 5 chlorophyll a, 1 chlorophyll a', 2 phylloquinones and 3 4Fe-4S clusters. PSI core antenna: 90 chlorophyll a, 22 carotenoids, 3 phospholipids and 1 galactolipid. P700 is a chlorophyll a/chlorophyll a' dimer, A0 is one or more chlorophyll a, A1 is one or both phylloquinones and FX is a shared 4Fe-4S iron-sulfur center. is required as a cofactor.

It localises to the cellular thylakoid membrane. It catalyses the reaction reduced [plastocyanin] + hnu + oxidized [2Fe-2S]-[ferredoxin] = oxidized [plastocyanin] + reduced [2Fe-2S]-[ferredoxin]. PsaA and PsaB bind P700, the primary electron donor of photosystem I (PSI), as well as the electron acceptors A0, A1 and FX. PSI is a plastocyanin/cytochrome c6-ferredoxin oxidoreductase, converting photonic excitation into a charge separation, which transfers an electron from the donor P700 chlorophyll pair to the spectroscopically characterized acceptors A0, A1, FX, FA and FB in turn. Oxidized P700 is reduced on the lumenal side of the thylakoid membrane by plastocyanin or cytochrome c6. The protein is Photosystem I P700 chlorophyll a apoprotein A1 of Mastigocladus laminosus (Fischerella sp.).